A 319-amino-acid chain; its full sequence is Dehydrogenase/reductase SDR family member 9 (319 aa).

An N-terminal signal peptide occupies residues 1–17; sequence MLFWVLGLLILCGFLWT. NAD(+) contacts are provided by residues 34 to 58 and D83; that span reads ITGCDSGFGNLAARTFDKKGFHVIA. Residue S164 participates in substrate binding. Residue Y176 is the Proton acceptor of the active site. K180 contacts NAD(+).

Belongs to the short-chain dehydrogenases/reductases (SDR) family. In terms of assembly, homotetramer. As to expression, highly expressed in trachea and epidermis. Detected at lower levels in spinal cord, bone marrow, brain, tongue, esophagus, heart, colon, testis, placenta, lung, skeletal muscle and lymph node.

It localises to the microsome membrane. It is found in the endoplasmic reticulum membrane. It catalyses the reaction 3beta-hydroxy-5alpha-pregnane-20-one + NAD(+) = 5alpha-pregnane-3,20-dione + NADH + H(+). The catalysed reaction is 17beta-hydroxy-5alpha-androstan-3-one + NAD(+) = 5alpha-androstan-3,17-dione + NADH + H(+). The enzyme catalyses androsterone + NAD(+) = 5alpha-androstan-3,17-dione + NADH + H(+). It carries out the reaction 5alpha-androstane-3alpha,17beta-diol + NAD(+) = 17beta-hydroxy-5alpha-androstan-3-one + NADH + H(+). It catalyses the reaction all-trans-retinol + NAD(+) = all-trans-retinal + NADH + H(+). The catalysed reaction is 3alpha-hydroxy-5alpha-pregnan-20-one + NAD(+) = 5alpha-pregnane-3,20-dione + NADH + H(+). In terms of biological role, 3-alpha-hydroxysteroid dehydrogenase that converts 3-alpha-tetrahydroprogesterone (allopregnanolone) to dihydroxyprogesterone and 3-alpha-androstanediol to dihydroxyprogesterone. Also plays a role in the biosynthesis of retinoic acid from retinaldehyde. Can utilize both NADH and NADPH. The chain is Dehydrogenase/reductase SDR family member 9 (DHRS9) from Homo sapiens (Human).